The sequence spans 148 residues: Protein Smg homolog (148 aa).

Belongs to the Smg family.

This Thiobacillus denitrificans (strain ATCC 25259 / T1) protein is Protein Smg homolog.